Reading from the N-terminus, the 835-residue chain is Leucine--tRNA ligase (835 aa).

The 'HIGH' region signature appears at 44-54 (PYPSGNIHMGH). The 'KMSKS' region motif lies at 587–591 (KMSKS). Residue lysine 590 participates in ATP binding.

It belongs to the class-I aminoacyl-tRNA synthetase family.

Its subcellular location is the cytoplasm. It catalyses the reaction tRNA(Leu) + L-leucine + ATP = L-leucyl-tRNA(Leu) + AMP + diphosphate. This is Leucine--tRNA ligase from Lawsonia intracellularis (strain PHE/MN1-00).